We begin with the raw amino-acid sequence, 124 residues long: Histone H2A (124 aa).

Positions 1–18 (MSGRGKGGKAKGKSKSRS) are enriched in basic residues. The interval 1–23 (MSGRGKGGKAKGKSKSRSSRAGL) is disordered. N-acetylserine is present on S2. S2 carries the post-translational modification Phosphoserine. At Q104 the chain carries N5-methylglutamine.

This sequence belongs to the histone H2A family. In terms of assembly, the nucleosome is a histone octamer containing two molecules each of H2A, H2B, H3 and H4 assembled in one H3-H4 heterotetramer and two H2A-H2B heterodimers. The octamer wraps approximately 147 bp of DNA. In terms of processing, the N-terminal serine is acetylated. That serine is also phosphorylated in approximately 60% of the molecules isolated from erythrocytes.

The protein localises to the nucleus. It localises to the chromosome. In terms of biological role, core component of nucleosome. Nucleosomes wrap and compact DNA into chromatin, limiting DNA accessibility to the cellular machineries which require DNA as a template. Histones thereby play a central role in transcription regulation, DNA repair, DNA replication and chromosomal stability. DNA accessibility is regulated via a complex set of post-translational modifications of histones, also called histone code, and nucleosome remodeling. In Sipunculus nudus (Sipunculan worm), this protein is Histone H2A.